The sequence spans 428 residues: Sorting nexin-31 (428 aa).

Residues 1–107 (MHICIPVTEE…EYFKKLQMDT (107 aa)) form the PX domain.

The protein belongs to the sorting nexin family.

Its function is as follows. May be involved in protein trafficking. The chain is Sorting nexin-31 (snx31) from Xenopus tropicalis (Western clawed frog).